The chain runs to 308 residues: Glycine--tRNA ligase alpha subunit (308 aa).

It belongs to the class-II aminoacyl-tRNA synthetase family. As to quaternary structure, tetramer of two alpha and two beta subunits.

The protein resides in the cytoplasm. It catalyses the reaction tRNA(Gly) + glycine + ATP = glycyl-tRNA(Gly) + AMP + diphosphate. The sequence is that of Glycine--tRNA ligase alpha subunit from Brevibacillus brevis (strain 47 / JCM 6285 / NBRC 100599).